The sequence spans 153 residues: MLSQLPLFAGGEIVRGFGRGSKELGIPTANFPLEVVKSLPESLPTGAYYGWANVDNGPVHKMVLSIGWNPFYNNKEKSVETHMLHDFNCDLYGQTLKICIVGYLRPERSFDSLESLIAAIRGDIEQAKAFLDEADKAKLKEAPFFTEKLCSSK.

Mg(2+) is bound by residues T28 and N30. The active-site Nucleophile is the E80.

Monomer. Zn(2+) is required as a cofactor. The cofactor is Mg(2+).

It is found in the cytoplasm. It catalyses the reaction riboflavin + ATP = FMN + ADP + H(+). Its pathway is cofactor biosynthesis; FMN biosynthesis; FMN from riboflavin (ATP route): step 1/1. Catalyzes the phosphorylation of riboflavin (vitamin B2) to form flavin-mononucleotide (FMN). This Drosophila melanogaster (Fruit fly) protein is Putative riboflavin kinase.